A 123-amino-acid polypeptide reads, in one-letter code: MALFKINKGEIMNFVNSTQLKTDIPNFDSGDTIIVHNRIVEGKKSRIQKFEGVVLRRRGSGSSETVIVRKESSGIGVEQSFNIHSPLVEKIEVIKYGKVRRAYISYMRNRSGKSARIKELNKQ.

Belongs to the bacterial ribosomal protein bL19 family.

Its function is as follows. This protein is located at the 30S-50S ribosomal subunit interface and may play a role in the structure and function of the aminoacyl-tRNA binding site. The chain is Large ribosomal subunit protein bL19 from Ureaplasma parvum serovar 3 (strain ATCC 27815 / 27 / NCTC 11736).